A 687-amino-acid polypeptide reads, in one-letter code: uncharacterized protein (687 aa).

Transmembrane regions (helical) follow at residues 28-48 (IIFT…TIVV), 66-86 (WAVT…GKLG), 94-114 (VLLG…LSQT), 126-146 (GVGA…VVPL), 154-174 (GVLG…GGWL), 182-202 (WAFW…ATAV), 211-231 (PVID…LIMA), 243-263 (SATI…FVWL), 287-307 (VLSF…PIYL), 320-340 (LRTL…GVLV), 348-368 (IFPV…SQMD), 378-398 (LYLV…VLIV), 414-434 (VTFF…ALFV), and 480-500 (LTQV…LALL).

Belongs to the major facilitator superfamily. TCR/Tet family.

It is found in the cell membrane. This is an uncharacterized protein from Mycobacterium tuberculosis (strain CDC 1551 / Oshkosh).